Consider the following 1119-residue polypeptide: SH3 and PX domain-containing protein 2A (1119 aa).

The PX domain maps to 4 to 128 (RTVLDVKVVD…RFFETKPDDI (125 aa)). SH3 domains follow at residues 149-208 (MVLE…SQSG) and 249-308 (SREE…KLKD). Disordered stretches follow at residues 388–429 (SSAT…PPRR), 494–595 (APSS…SNPA), 641–815 (SSDD…HESV), 914–941 (NLRS…AMLN), and 957–1004 (RPQS…SSFT). Residues 445-504 (TVEAEYYTIAEFQSSISDGISFRGGQKADVIEKNSGGWWYVQIGDTEGWAPSSYIDKRKK) form the SH3 3 domain. Composition is skewed to basic and acidic residues over residues 581 to 590 (PKPEPRKFEI) and 688 to 718 (GRAE…DVEI). A compositionally biased stretch (low complexity) spans 779–802 (TASVVSSEDSTSSRSTSDLSSVYS). Residues 806–815 (RGGESDHESV) are compositionally biased toward basic and acidic residues. One can recognise an SH3 4 domain in the interval 812–871 (HESVLFRTTDAYERAQESELSFPAGVEVEVLEKQESGWWFVRWGSDEGWVPTFYLEPIKH). Residues 1058–1119 (NLREVYVSIA…VPSNYLERKK (62 aa)) enclose the SH3 5 domain.

The protein belongs to the SH3PXD2 family. In terms of processing, tyrosine phosphorylated.

The protein localises to the cytoplasm. The protein resides in the cell projection. Its subcellular location is the podosome. In terms of biological role, adapter protein involved in invadopodia and podosome formation and extracellular matrix degradation. The protein is SH3 and PX domain-containing protein 2A (sh3pxd2a) of Danio rerio (Zebrafish).